The chain runs to 438 residues: UDP-N-acetylmuramoylalanine--D-glutamate ligase (438 aa).

An ATP-binding site is contributed by 112–118 (GSNGKST).

The protein belongs to the MurCDEF family.

It is found in the cytoplasm. The catalysed reaction is UDP-N-acetyl-alpha-D-muramoyl-L-alanine + D-glutamate + ATP = UDP-N-acetyl-alpha-D-muramoyl-L-alanyl-D-glutamate + ADP + phosphate + H(+). Its pathway is cell wall biogenesis; peptidoglycan biosynthesis. Cell wall formation. Catalyzes the addition of glutamate to the nucleotide precursor UDP-N-acetylmuramoyl-L-alanine (UMA). This Salmonella typhimurium (strain LT2 / SGSC1412 / ATCC 700720) protein is UDP-N-acetylmuramoylalanine--D-glutamate ligase.